A 109-amino-acid polypeptide reads, in one-letter code: Protein ELF4-LIKE 3 (109 aa).

Positions 88-109 (SMEASSEGDSSEGRGNRRIRPA) are disordered.

This sequence belongs to the EARLY FLOWERING 4 family. As to quaternary structure, homodimer.

The protein localises to the nucleus. Functionally, component of the central CCA1/LHY-TOC1 feedback loop in the circadian clock that promotes clock accuracy and is required for sustained rhythms in the absence of daily light/dark cycles. The polypeptide is Protein ELF4-LIKE 3 (EFL3) (Arabidopsis thaliana (Mouse-ear cress)).